Here is a 692-residue protein sequence, read N- to C-terminus: Glycogen phosphorylase (692 aa).

Lys-586 is subject to N6-(pyridoxal phosphate)lysine.

It belongs to the glycogen phosphorylase family. Pyridoxal 5'-phosphate is required as a cofactor.

The enzyme catalyses [(1-&gt;4)-alpha-D-glucosyl](n) + phosphate = [(1-&gt;4)-alpha-D-glucosyl](n-1) + alpha-D-glucose 1-phosphate. Its function is as follows. Phosphorylase is an important allosteric enzyme in carbohydrate metabolism. Enzymes from different sources differ in their regulatory mechanisms and in their natural substrates. However, all known phosphorylases share catalytic and structural properties. The polypeptide is Glycogen phosphorylase (glgP) (Aquifex aeolicus (strain VF5)).